The sequence spans 457 residues: Cysteine--tRNA ligase (457 aa).

Position 27 (Cys27) interacts with Zn(2+). The short motif at 29 to 39 (PTVYDFAHIGN) is the 'HIGH' region element. Residues Cys211, His236, and Glu240 each contribute to the Zn(2+) site. The 'KMSKS' region motif lies at 269–273 (KMSKS). Lys272 serves as a coordination point for ATP.

This sequence belongs to the class-I aminoacyl-tRNA synthetase family. Monomer. The cofactor is Zn(2+).

The protein localises to the cytoplasm. The enzyme catalyses tRNA(Cys) + L-cysteine + ATP = L-cysteinyl-tRNA(Cys) + AMP + diphosphate. This chain is Cysteine--tRNA ligase, found in Ehrlichia ruminantium (strain Gardel).